A 132-amino-acid polypeptide reads, in one-letter code: Small ribosomal subunit protein uS8 (132 aa).

It belongs to the universal ribosomal protein uS8 family. As to quaternary structure, part of the 30S ribosomal subunit. Contacts proteins S5 and S12.

One of the primary rRNA binding proteins, it binds directly to 16S rRNA central domain where it helps coordinate assembly of the platform of the 30S subunit. This chain is Small ribosomal subunit protein uS8, found in Lysinibacillus sphaericus (strain C3-41).